Reading from the N-terminus, the 38-residue chain is GVPINVPCTGSPQCIKPCKDAGMRFGKCMNRKCHCTPK.

3 disulfide bridges follow: cysteine 8-cysteine 28, cysteine 14-cysteine 33, and cysteine 18-cysteine 35. The tract at residues 26–33 (GKCMNRKC) is interaction with Ca(2+)-activated K(+) channels.

This sequence belongs to the short scorpion toxin superfamily. Potassium channel inhibitor family. Alpha-KTx 03 subfamily. As to expression, expressed by the venom gland.

It is found in the secreted. In terms of biological role, potent inhibitor of shaker potassium channels as well as the mammalian homologs of shaker. The polypeptide is Potassium channel toxin alpha-KTx 3.3 (Leiurus hebraeus (Hebrew deathstalker scorpion)).